The following is a 379-amino-acid chain: MNPRLRVYIFAGIFLFIALIILIKIFFEEEKFDVLVVSLDSKEKTSKECLSNLQSVSIPVPALIIDKTVLKAIYQENCEHIFERKIKIGIDKRNWKLIANHNESSIFECIRMENKTSNDYLQFDTQPARAVLKNFNTFSIGNLHIPSNIPLFLKMWERSEIRGCLNLIVHRNMTKSQQFNHGKEAAEKLAEFRDVLLTFNMFAFLNGGTLLGWYRECGFIPHTADIDLAMFAEDFHPEITHFLLSRTSSFQLLRSLGMLNDSYELTVTPKTGYIVNMDLFLMYKDVHKNGSVINWVGGASNDIKYKYTYPAYDPWCAADLHGHLFWVTCSPQKMLVFEYGNLWYEDHPSSQYDWRSTAKNVRTNGLWSDVELKNVSKLY.

Residues 7-27 (VYIFAGIFLFIALIILIKIFF) traverse the membrane as a helical segment.

The protein resides in the membrane. This is an uncharacterized protein from Caenorhabditis elegans.